A 207-amino-acid polypeptide reads, in one-letter code: Dephospho-CoA kinase (207 aa).

Residues 12–207 (LIGITGMIGG…LYSTLLGKML (196 aa)) enclose the DPCK domain. ATP is bound at residue 20-25 (GGGKST).

It belongs to the CoaE family.

The protein localises to the cytoplasm. The catalysed reaction is 3'-dephospho-CoA + ATP = ADP + CoA + H(+). It participates in cofactor biosynthesis; coenzyme A biosynthesis; CoA from (R)-pantothenate: step 5/5. In terms of biological role, catalyzes the phosphorylation of the 3'-hydroxyl group of dephosphocoenzyme A to form coenzyme A. In Leptospira interrogans serogroup Icterohaemorrhagiae serovar Lai (strain 56601), this protein is Dephospho-CoA kinase.